Reading from the N-terminus, the 500-residue chain is 4-aminobutyrate aminotransferase, mitochondrial (500 aa).

Residues 1–28 (MASVLLTRRLACSFRHNHRLLVPGWRHI) constitute a mitochondrion transit peptide. Position 163 (cysteine 163) interacts with [2Fe-2S] cluster. Residue 164-165 (GS) coordinates pyridoxal 5'-phosphate. Position 166 (cysteine 166) interacts with [2Fe-2S] cluster. Arginine 220 contributes to the substrate binding site. Lysine 231 is subject to N6-succinyllysine. Lysine 252 is subject to N6-acetyllysine; alternate. Position 252 is an N6-succinyllysine; alternate (lysine 252). Residues lysine 279 and lysine 318 each carry the N6-acetyllysine modification. Lysine 357 bears the N6-(pyridoxal phosphate)lysine mark. Position 381 (threonine 381) interacts with pyridoxal 5'-phosphate. Lysine 413 is subject to N6-acetyllysine; alternate. Position 413 is an N6-succinyllysine; alternate (lysine 413). N6-acetyllysine occurs at positions 452 and 470.

This sequence belongs to the class-III pyridoxal-phosphate-dependent aminotransferase family. Homodimer; disulfide-linked. The cofactor is pyridoxal 5'-phosphate. [2Fe-2S] cluster serves as cofactor.

Its subcellular location is the mitochondrion matrix. The catalysed reaction is 4-aminobutanoate + 2-oxoglutarate = succinate semialdehyde + L-glutamate. The enzyme catalyses (S)-3-amino-2-methylpropanoate + 2-oxoglutarate = 2-methyl-3-oxopropanoate + L-glutamate. Catalyzes the conversion of gamma-aminobutyrate and L-beta-aminoisobutyrate to succinate semialdehyde and methylmalonate semialdehyde, respectively. Can also convert delta-aminovalerate and beta-alanine. This is 4-aminobutyrate aminotransferase, mitochondrial (ABAT) from Sus scrofa (Pig).